The following is a 96-amino-acid chain: Co-chaperonin GroES (96 aa).

Belongs to the GroES chaperonin family. As to quaternary structure, heptamer of 7 subunits arranged in a ring. Interacts with the chaperonin GroEL.

Its subcellular location is the cytoplasm. In terms of biological role, together with the chaperonin GroEL, plays an essential role in assisting protein folding. The GroEL-GroES system forms a nano-cage that allows encapsulation of the non-native substrate proteins and provides a physical environment optimized to promote and accelerate protein folding. GroES binds to the apical surface of the GroEL ring, thereby capping the opening of the GroEL channel. The chain is Co-chaperonin GroES from Haemophilus influenzae (strain 86-028NP).